Here is an 833-residue protein sequence, read N- to C-terminus: Glycerol-3-phosphate acyltransferase (833 aa).

Positions 309–314 (CHRSHI) match the HXXXXD motif motif.

The protein belongs to the GPAT/DAPAT family.

It is found in the cell inner membrane. It carries out the reaction sn-glycerol 3-phosphate + an acyl-CoA = a 1-acyl-sn-glycero-3-phosphate + CoA. The protein operates within phospholipid metabolism; CDP-diacylglycerol biosynthesis; CDP-diacylglycerol from sn-glycerol 3-phosphate: step 1/3. The sequence is that of Glycerol-3-phosphate acyltransferase from Pseudomonas savastanoi pv. phaseolicola (strain 1448A / Race 6) (Pseudomonas syringae pv. phaseolicola (strain 1448A / Race 6)).